Reading from the N-terminus, the 36-residue chain is Photosystem II reaction center protein X (36 aa).

Residues 9–29 form a helical membrane-spanning segment; that stretch reads LWSIFWGGVVVALGAAALTAI.

This sequence belongs to the PsbX family. Type 1 subfamily. In terms of assembly, PSII is composed of 1 copy each of membrane proteins PsbA, PsbB, PsbC, PsbD, PsbE, PsbF, PsbH, PsbI, PsbJ, PsbK, PsbL, PsbM, PsbT, PsbX, Psb30/Ycf12, peripheral proteins PsbO, CyanoQ (PsbQ), PsbU, PsbV and a large number of cofactors. It forms dimeric complexes.

It localises to the cell inner membrane. In terms of biological role, involved in the binding and/or turnover of quinones at the Q(B) site of photosystem II (PSII). PSII is a light-driven water plastoquinone oxidoreductase, using light energy to abstract electrons from H(2)O, generating a proton gradient subsequently used for ATP formation. This Gloeobacter violaceus (strain ATCC 29082 / PCC 7421) protein is Photosystem II reaction center protein X.